Here is a 337-residue protein sequence, read N- to C-terminus: Phenylalanine--tRNA ligase alpha subunit (337 aa).

Glutamate 258 provides a ligand contact to Mg(2+).

Belongs to the class-II aminoacyl-tRNA synthetase family. Phe-tRNA synthetase alpha subunit type 1 subfamily. In terms of assembly, tetramer of two alpha and two beta subunits. Mg(2+) serves as cofactor.

It localises to the cytoplasm. It carries out the reaction tRNA(Phe) + L-phenylalanine + ATP = L-phenylalanyl-tRNA(Phe) + AMP + diphosphate + H(+). The protein is Phenylalanine--tRNA ligase alpha subunit of Paraburkholderia phytofirmans (strain DSM 17436 / LMG 22146 / PsJN) (Burkholderia phytofirmans).